Here is a 326-residue protein sequence, read N- to C-terminus: Protein-arginine N-acetylglucosaminyltransferase NleB2 (326 aa).

UDP-N-acetyl-alpha-D-glucosamine is bound by residues 45–47, Y69, and 216–219; these read QWF and YLDM. The DXD motif signature appears at 218–220; sequence DMD. Residue D220 participates in Mn(2+) binding. Residue E250 is the Proton acceptor of the active site. 2 residues coordinate Mn(2+): N317 and S319. UDP-N-acetyl-alpha-D-glucosamine-binding positions include S319 and 324-326; that span reads SSW.

Belongs to the glycosyltransferase NleB family. Mn(2+) is required as a cofactor.

The protein resides in the secreted. The protein localises to the host cell. It catalyses the reaction L-arginyl-[protein] + UDP-N-acetyl-alpha-D-glucosamine = N(omega)-(N-acetyl-beta-D-glucosaminyl)-L-arginyl-[protein] + UDP + H(+). Protein-arginine N-acetylglucosaminyltransferase effector that catalyzes the transfer of a single N-acetylglucosamine (GlcNAc) to a conserved arginine residue of host target proteins. In contrast to NleB1, not able to disrupt TNF signaling in infected cells. Shows a lower enzymatic activity than NleB1. The sequence is that of Protein-arginine N-acetylglucosaminyltransferase NleB2 from Escherichia coli O145:H28 (strain RM12581).